Consider the following 92-residue polypeptide: Gene 80 protein (92 aa).

The protein is Gene 80 protein (80) of Mycobacterium phage L5 (Mycobacteriophage L5).